The sequence spans 270 residues: Pancreas transcription factor 1 subunit alpha (270 aa).

Residues 119–171 (QLRQAANVRERRRMQSINDAFEGLRSHIPTLPYEKRLSKVDTLRLAIGYINFL) form the bHLH domain.

The protein resides in the nucleus. In terms of biological role, transcription factor implicated in the cell fate determination in various organs. Binds to the E-box consensus sequence 5'-CANNTG-3'. Acts together with pdx1 to induce the pancreatic lineage within the endoderm. Plays a central role in directing the differentiation of retinal progenitors towards horizontal and amacrine fates. The chain is Pancreas transcription factor 1 subunit alpha (ptf1a) from Xenopus laevis (African clawed frog).